A 392-amino-acid chain; its full sequence is uncharacterized protein (392 aa).

Belongs to the chlamydial CPn_0675/CT_696/TC_0068 family.

This is an uncharacterized protein from Chlamydia trachomatis serovar D (strain ATCC VR-885 / DSM 19411 / UW-3/Cx).